Reading from the N-terminus, the 426-residue chain is Glutamyl-tRNA reductase (426 aa).

Substrate is bound by residues 49–52 (TCNR), Ser-101, 106–108 (EPQ), and Gln-112. The active-site Nucleophile is Cys-50. 181-186 (GAGETI) provides a ligand contact to NADP(+). The disordered stretch occupies residues 404–426 (DRLFPEKPGLPTSPHSYPDREDR).

Belongs to the glutamyl-tRNA reductase family. As to quaternary structure, homodimer.

It carries out the reaction (S)-4-amino-5-oxopentanoate + tRNA(Glu) + NADP(+) = L-glutamyl-tRNA(Glu) + NADPH + H(+). The protein operates within porphyrin-containing compound metabolism; protoporphyrin-IX biosynthesis; 5-aminolevulinate from L-glutamyl-tRNA(Glu): step 1/2. Functionally, catalyzes the NADPH-dependent reduction of glutamyl-tRNA(Glu) to glutamate 1-semialdehyde (GSA). This is Glutamyl-tRNA reductase from Xanthomonas campestris pv. phaseoli.